Reading from the N-terminus, the 272-residue chain is HMP-PP phosphatase (272 aa).

Catalysis depends on aspartate 8, which acts as the Nucleophile. Mg(2+) is bound by residues aspartate 8, aspartate 10, and aspartate 212.

The protein belongs to the HAD-like hydrolase superfamily. Cof family. Requires Mg(2+) as cofactor.

The enzyme catalyses 4-amino-2-methyl-5-(diphosphooxymethyl)pyrimidine + H2O = 4-amino-2-methyl-5-(phosphooxymethyl)pyrimidine + phosphate + H(+). Its function is as follows. Catalyzes the hydrolysis of 4-amino-2-methyl-5-hydroxymethylpyrimidine pyrophosphate (HMP-PP) to 4-amino-2-methyl-5-hydroxymethylpyrimidine phosphate (HMP-P). This is HMP-PP phosphatase from Escherichia coli (strain UTI89 / UPEC).